The chain runs to 227 residues: Enolase-phosphatase E1 (227 aa).

Residues Asp-11 and Glu-13 each contribute to the Mg(2+) site. Substrate-binding positions include 118–119 (SS) and Lys-161. Residue Asp-186 participates in Mg(2+) binding.

This sequence belongs to the HAD-like hydrolase superfamily. MasA/MtnC family. As to quaternary structure, monomer. The cofactor is Mg(2+).

The protein resides in the cytoplasm. It localises to the nucleus. The enzyme catalyses 5-methylsulfanyl-2,3-dioxopentyl phosphate + H2O = 1,2-dihydroxy-5-(methylsulfanyl)pent-1-en-3-one + phosphate. It participates in amino-acid biosynthesis; L-methionine biosynthesis via salvage pathway; L-methionine from S-methyl-5-thio-alpha-D-ribose 1-phosphate: step 3/6. Its pathway is amino-acid biosynthesis; L-methionine biosynthesis via salvage pathway; L-methionine from S-methyl-5-thio-alpha-D-ribose 1-phosphate: step 4/6. In terms of biological role, bifunctional enzyme that catalyzes the enolization of 2,3-diketo-5-methylthiopentyl-1-phosphate (DK-MTP-1-P) into the intermediate 2-hydroxy-3-keto-5-methylthiopentenyl-1-phosphate (HK-MTPenyl-1-P), which is then dephosphorylated to form the acireductone 1,2-dihydroxy-3-keto-5-methylthiopentene (DHK-MTPene). This is Enolase-phosphatase E1 from Saccharomyces cerevisiae (strain YJM789) (Baker's yeast).